A 310-amino-acid polypeptide reads, in one-letter code: Acetyl-coenzyme A carboxylase carboxyl transferase subunit alpha (310 aa).

Residues 31 to 285 (SFERELRIIN…KQKILRRLKQ (255 aa)) form the CoA carboxyltransferase C-terminal domain.

This sequence belongs to the AccA family. Acetyl-CoA carboxylase is a heterohexamer composed of biotin carboxyl carrier protein (accB), biotin carboxylase (accC) and two subunits each of ACCase subunit alpha (accA) and ACCase subunit beta (accD).

It is found in the plastid. The protein resides in the chloroplast. It catalyses the reaction N(6)-carboxybiotinyl-L-lysyl-[protein] + acetyl-CoA = N(6)-biotinyl-L-lysyl-[protein] + malonyl-CoA. It participates in lipid metabolism; malonyl-CoA biosynthesis; malonyl-CoA from acetyl-CoA: step 1/1. In terms of biological role, component of the acetyl coenzyme A carboxylase (ACC) complex. First, biotin carboxylase catalyzes the carboxylation of biotin on its carrier protein (BCCP) and then the CO(2) group is transferred by the carboxyltransferase to acetyl-CoA to form malonyl-CoA. In Cyanidioschyzon merolae (strain NIES-3377 / 10D) (Unicellular red alga), this protein is Acetyl-coenzyme A carboxylase carboxyl transferase subunit alpha.